The sequence spans 238 residues: Cysteine-rich venom protein pseudechetoxin-like (238 aa).

Positions 1 to 19 (MIAFIVLLSLAAVLQQSSG) are cleaved as a signal peptide. Positions 20 to 28 (TVDFASESS) are excised as a propeptide. The SCP domain occupies 38 to 164 (VDKHNALRRS…STKYLYVCQY (127 aa)). Intrachain disulfides connect Cys-75-Cys-153, Cys-92-Cys-165, Cys-148-Cys-162, Cys-184-Cys-191, Cys-187-Cys-196, Cys-200-Cys-233, Cys-209-Cys-227, and Cys-218-Cys-231. In terms of domain architecture, ShKT spans 200–233 (CKHEDDFSNCKALAKNSKCQTAWIKSKCPATCFC).

This sequence belongs to the CRISP family. In terms of tissue distribution, expressed by the venom gland.

The protein localises to the secreted. Its function is as follows. Blocks olfactory (CNGA2) and retinal (CNGA1) CNG channel currents. Does not affect neither depolarization- nor caffeine-induced contraction of smooth muscle. The protein is Cysteine-rich venom protein pseudechetoxin-like of Hoplocephalus stephensii (Stephens's banded snake).